We begin with the raw amino-acid sequence, 1045 residues long: Unconventional myosin-Ia (1045 aa).

The Myosin motor domain occupies A11–Q697. G104 to T111 provides a ligand contact to ATP. The tract at residues V574–D596 is actin-binding. IQ domains lie at A701–Q727, M723–V750, and M746–A774. Positions K861–V1044 constitute a TH1 domain.

Belongs to the TRAFAC class myosin-kinesin ATPase superfamily. Myosin family. In terms of tissue distribution, intestine.

Its function is as follows. Could play an important role in morphogenesis and function of intestinal microvilli. This is Unconventional myosin-Ia (MYO1A) from Gallus gallus (Chicken).